Reading from the N-terminus, the 497-residue chain is Probable cytosol aminopeptidase (497 aa).

Mn(2+)-binding residues include K263 and D268. K275 is an active-site residue. D286, D345, and E347 together coordinate Mn(2+). The active site involves R349.

Belongs to the peptidase M17 family. Requires Mn(2+) as cofactor.

It localises to the cytoplasm. It catalyses the reaction Release of an N-terminal amino acid, Xaa-|-Yaa-, in which Xaa is preferably Leu, but may be other amino acids including Pro although not Arg or Lys, and Yaa may be Pro. Amino acid amides and methyl esters are also readily hydrolyzed, but rates on arylamides are exceedingly low.. The catalysed reaction is Release of an N-terminal amino acid, preferentially leucine, but not glutamic or aspartic acids.. In terms of biological role, presumably involved in the processing and regular turnover of intracellular proteins. Catalyzes the removal of unsubstituted N-terminal amino acids from various peptides. This Rhizobium meliloti (strain 1021) (Ensifer meliloti) protein is Probable cytosol aminopeptidase.